The following is a 131-amino-acid chain: Small ribosomal subunit protein uS11 (131 aa).

Belongs to the universal ribosomal protein uS11 family. As to quaternary structure, part of the 30S ribosomal subunit. Interacts with proteins S7 and S18. Binds to IF-3.

Functionally, located on the platform of the 30S subunit, it bridges several disparate RNA helices of the 16S rRNA. Forms part of the Shine-Dalgarno cleft in the 70S ribosome. In Halorhodospira halophila (strain DSM 244 / SL1) (Ectothiorhodospira halophila (strain DSM 244 / SL1)), this protein is Small ribosomal subunit protein uS11.